The primary structure comprises 267 residues: Sorbitol-6-phosphate 2-dehydrogenase (267 aa).

9 to 38 (DNVIIVTGGASGIGLAIVDELLSQGAHVQM) lines the NAD(+) pocket. Residue S147 coordinates substrate. Y160 functions as the Proton acceptor in the catalytic mechanism.

This sequence belongs to the short-chain dehydrogenases/reductases (SDR) family. As to quaternary structure, homotetramer.

The catalysed reaction is D-sorbitol 6-phosphate + NAD(+) = beta-D-fructose 6-phosphate + NADH + H(+). Its pathway is carbohydrate metabolism; D-sorbitol degradation; D-fructose 6-phosphate from D-sorbitol 6-phosphate: step 1/1. This is Sorbitol-6-phosphate 2-dehydrogenase (sorD) from Klebsiella pneumoniae.